The chain runs to 309 residues: Nucleotide-binding protein cgR_1639 (309 aa).

ATP is bound at residue 32–39 (GMSGAGLS). 83-86 (DVRS) contributes to the GTP binding site.

Belongs to the RapZ-like family.

Functionally, displays ATPase and GTPase activities. The sequence is that of Nucleotide-binding protein cgR_1639 from Corynebacterium glutamicum (strain R).